A 313-amino-acid chain; its full sequence is tRNA pseudouridine synthase B (313 aa).

The Nucleophile role is filled by Asp42.

It belongs to the pseudouridine synthase TruB family. Type 1 subfamily.

It carries out the reaction uridine(55) in tRNA = pseudouridine(55) in tRNA. Responsible for synthesis of pseudouridine from uracil-55 in the psi GC loop of transfer RNAs. The sequence is that of tRNA pseudouridine synthase B from Prochlorococcus marinus (strain SARG / CCMP1375 / SS120).